The sequence spans 538 residues: Sterile alpha motif domain-containing protein 1 (538 aa).

Residues 1 to 11 are compositionally biased toward pro residues; sequence MAGPPALPPPE. Disordered regions lie at residues 1–30 and 92–247; these read MAGP…ASPH and SYRN…GAAR. Low complexity predominate over residues 12-29; that stretch reads TAAAATTAAAASSSAASP. An SAMD1-like winged helix (WH) domain is found at 23-99; sequence SSSAASPHYQ…SISYRNAARV (77 aa). Thr107 carries the post-translational modification Phosphothreonine. Residues 115 to 125 show a composition bias toward low complexity; that stretch reads PRGAPAAAAAA. Residues 126–139 are compositionally biased toward pro residues; that stretch reads APPPTPAPPPPPAP. Residues 140-158 are compositionally biased toward low complexity; it reads VAAAAPARAPRAAAAAATA. The residue at position 161 (Ser161) is a Phosphoserine. The segment covering 168 to 177 has biased composition (low complexity); that stretch reads GPRAQRAAPL. A compositionally biased stretch (pro residues) spans 178-236; sequence AAPPPAPAAPPAVAPPAGPRRAPPPAVAAREPPLPPPPQPPAPPQQQQPPPPQPQPPPE. Over residues 237 to 247 the composition is skewed to low complexity; it reads GGAVRAGGAAR. Phosphoserine is present on Ser261. Over residues 282–291 the composition is skewed to basic and acidic residues; that stretch reads AARGRLERTR. The tract at residues 282-458 is disordered; that stretch reads AARGRLERTR…PPGRKEKPSD (177 aa). Acidic residues predominate over residues 328–351; sequence KEEEEDDDEDEDEEDDVSEGSEVP. Positions 425-436 are enriched in pro residues; it reads SPSPVPLPPGKP. The 69-residue stretch at 462–530 folds into the SAM domain; it reads WTVMDVVEYF…KVLQQGHFED (69 aa).

Homopolymerize into a closed pentameric ring. Interacts (via SAM domain) with L3MBTL3 (via SAM domain); the interaction mediates L3MBTL3 binding to chromatin. Interacts (via WH domain) with KDM1A; the interaction modulates KDM1A function. As to expression, expressed in atherosclerotic lesions, not in normal intima. Expressed in foam cells.

It is found in the nucleus. The protein resides in the chromosome. It localises to the secreted. Its function is as follows. Unmethylated CpG islands (CGIs)-binding protein which localizes to H3K4me3-decorated CGIs, where it acts as a transcriptional repressor. Tethers L3MBTL3 to chromatin and interacts with the KDM1A histone demethylase complex to modulate H3K4me2 and H3K4me3 levels at CGIs. Plays a role in atherogenesis by binding with LDL on cell surface and promoting LDL oxidation which leads to the formation of foam cell. The chain is Sterile alpha motif domain-containing protein 1 from Homo sapiens (Human).